A 166-amino-acid chain; its full sequence is Protein TIFY 11e (166 aa).

Residues 65–100 (ASSAAAQMTIFYGGRVLVLDECPADRAAALLRLAAS) enclose the Tify domain. The short motif at 123 to 148 (PVARKASLQRFMEKRKGRLAARGQPY) is the Jas element. Positions 125-132 (ARKASLQR) match the Nuclear localization signal motif.

The protein belongs to the TIFY/JAZ family. Post-translationally, ubiquitinated. Targeted for degradation by the SCF(COI1) E3 ubiquitin ligase-proteasome pathway during jasmonate signaling.

The protein localises to the nucleus. In terms of biological role, repressor of jasmonate responses. In Oryza sativa subsp. japonica (Rice), this protein is Protein TIFY 11e.